The primary structure comprises 672 residues: tRNA(Met) cytidine acetyltransferase TmcA (672 aa).

ATP-binding positions include Gln180, 202-211 (GRGKSALAGQ), and Arg319. The N-acetyltransferase domain maps to 349–531 (IEISAFYQQA…SGCYTAMALL (183 aa)). Acetyl-CoA is bound by residues 461–463 (IAV), 468–474 (QREGIGQ), and Arg506.

The protein belongs to the RNA cytidine acetyltransferase family. TmcA subfamily.

The protein localises to the cytoplasm. The enzyme catalyses cytidine(34) in elongator tRNA(Met) + acetyl-CoA + ATP + H2O = N(4)-acetylcytidine(34) in elongator tRNA(Met) + ADP + phosphate + CoA + H(+). Catalyzes the formation of N(4)-acetylcytidine (ac(4)C) at the wobble position of tRNA(Met), by using acetyl-CoA as an acetyl donor and ATP (or GTP). In Salmonella typhimurium (strain LT2 / SGSC1412 / ATCC 700720), this protein is tRNA(Met) cytidine acetyltransferase TmcA.